Reading from the N-terminus, the 710-residue chain is Prolyl endopeptidase (710 aa).

Met-1 carries the N-acetylmethionine modification. Lys-157 is subject to N6-acetyllysine. Active-site charge relay system residues include Ser-554, Asp-641, and His-680.

The protein belongs to the peptidase S9A family. The N-terminus is blocked. As to expression, ubiquitous.

The protein localises to the cytoplasm. The enzyme catalyses Hydrolysis of Pro-|-Xaa &gt;&gt; Ala-|-Xaa in oligopeptides.. Cleaves peptide bonds on the C-terminal side of prolyl residues within peptides that are up to approximately 30 amino acids long. The polypeptide is Prolyl endopeptidase (PREP) (Sus scrofa (Pig)).